The sequence spans 571 residues: NADH-quinone oxidoreductase subunit C/D (571 aa).

The segment at 1–171 is NADH dehydrogenase I subunit C; that stretch reads MQASEKTLNE…NLSNTMNYRR (171 aa). An NADH dehydrogenase I subunit D region spans residues 194–571; it reads AQVVLNWGPL…LDPVVGEVDR (378 aa).

This sequence in the N-terminal section; belongs to the complex I 30 kDa subunit family. The protein in the C-terminal section; belongs to the complex I 49 kDa subunit family. As to quaternary structure, NDH-1 is composed of 13 different subunits. Subunits NuoB, CD, E, F, and G constitute the peripheral sector of the complex.

The protein resides in the cell inner membrane. The catalysed reaction is a quinone + NADH + 5 H(+)(in) = a quinol + NAD(+) + 4 H(+)(out). In terms of biological role, NDH-1 shuttles electrons from NADH, via FMN and iron-sulfur (Fe-S) centers, to quinones in the respiratory chain. The immediate electron acceptor for the enzyme in this species is believed to be ubiquinone. Couples the redox reaction to proton translocation (for every two electrons transferred, four hydrogen ions are translocated across the cytoplasmic membrane), and thus conserves the redox energy in a proton gradient. The chain is NADH-quinone oxidoreductase subunit C/D (nuoC) from Hydrogenobaculum sp. (strain Y04AAS1).